The sequence spans 403 residues: S-arrestin (403 aa).

Residues 11 to 19 are interaction with RHO; sequence HVIFKKVSR. The residue at position 231 (Thr-231) is a Phosphothreonine. A disordered region spans residues 381–403; the sequence is RQNLKDTGENTEGKKDEDAGQDE.

Belongs to the arrestin family. In terms of assembly, monomer. Homodimer. Homotetramer. Interacts with RHO (via the phosphorylated C-terminus). Detected in retina (at protein level).

The protein resides in the cell projection. The protein localises to the cilium. It localises to the photoreceptor outer segment. Its subcellular location is the membrane. Its function is as follows. Binds to photoactivated, phosphorylated RHO and terminates RHO signaling via G-proteins by competing with G-proteins for the same binding site on RHO. May play a role in preventing light-dependent degeneration of retinal photoreceptor cells. The chain is S-arrestin (Sag) from Mus musculus (Mouse).